The chain runs to 318 residues: Probable pyridoxal 5'-phosphate synthase subunit PDX1.1 (318 aa).

Asp-49 contacts D-ribose 5-phosphate. The active-site Schiff-base intermediate with D-ribose 5-phosphate is the Lys-106. Gly-178 serves as a coordination point for D-ribose 5-phosphate. Residue Arg-190 coordinates D-glyceraldehyde 3-phosphate. D-ribose 5-phosphate is bound by residues Gly-239 and 260-261 (GS).

The protein belongs to the PdxS/SNZ family.

The catalysed reaction is aldehydo-D-ribose 5-phosphate + D-glyceraldehyde 3-phosphate + L-glutamine = pyridoxal 5'-phosphate + L-glutamate + phosphate + 3 H2O + H(+). The protein operates within cofactor biosynthesis; pyridoxal 5'-phosphate biosynthesis. Its function is as follows. Catalyzes the formation of pyridoxal 5'-phosphate from ribose 5-phosphate (RBP), glyceraldehyde 3-phosphate (G3P) and ammonia. The ammonia is provided by PDX2. Can also use ribulose 5-phosphate and dihydroxyacetone phosphate as substrates, resulting from enzyme-catalyzed isomerization of RBP and G3P, respectively. Also plays an indirect role in resistance to singlet oxygen-generating photosensitizers. The protein is Probable pyridoxal 5'-phosphate synthase subunit PDX1.1 (PDX11) of Oryza sativa subsp. japonica (Rice).